A 510-amino-acid polypeptide reads, in one-letter code: Major facilitator superfamily domain-containing protein 4A (510 aa).

The next 12 membrane-spanning stretches (helical) occupy residues 19 to 39 (LTYWSVFFSFGLCIAFLGPTL), 53 to 73 (ISWVFFSQQLCLLLGSALGGV), 82 to 102 (LWALFTSTLVISLVFAVIPFC), 107 to 127 (VLASVIALAGLAMGCIDTVAN), 139 to 159 (AFFLQVLHFFVGLGALLSPLI), 218 to 238 (YAFWIMALINLPVPLAVLFLL), 303 to 323 (FFAIHITAALVLFMTDGMMGA), 345 to 365 (GYLPSLFWGFITLGRFISIPV), 380 to 400 (VGVVVTFLMLLIFSYNVIFLF), 401 to 421 (VGTASLGLFLSSTFPSMLAYT), 434 to 454 (VLVTGAGIGEMVLQMLVGLIF), and 462 to 482 (FLVCGVIFGCLAFIFYILLLF).

The protein belongs to the major facilitator superfamily.

The protein localises to the membrane. The sequence is that of Major facilitator superfamily domain-containing protein 4A from Mus musculus (Mouse).